We begin with the raw amino-acid sequence, 114 residues long: T cell receptor beta variable 4-1 (114 aa).

Positions 1–21 (MGCRLLCCAVLCLLGAVPIDT) are cleaved as a signal peptide. The 93-residue stretch at 22 to 114 (EVTQTPKHLV…SALYLCASSQ (93 aa)) folds into the Ig-like domain. An intrachain disulfide couples Cys42 to Cys110. N-linked (GlcNAc...) asparagine glycosylation is found at Asn76 and Asn89.

As to quaternary structure, alpha-beta TR is a heterodimer composed of an alpha and beta chain; disulfide-linked. The alpha-beta TR is associated with the transmembrane signaling CD3 coreceptor proteins to form the TR-CD3 (TcR or TCR). The assembly of alpha-beta TR heterodimers with CD3 occurs in the endoplasmic reticulum where a single alpha-beta TR heterodimer associates with one CD3D-CD3E heterodimer, one CD3G-CD3E heterodimer and one CD247 homodimer forming a stable octameric structure. CD3D-CD3E and CD3G-CD3E heterodimers preferentially associate with TR alpha and TR beta chains, respectively. The association of the CD247 homodimer is the last step of TcR assembly in the endoplasmic reticulum and is required for transport to the cell surface.

The protein resides in the cell membrane. V region of the variable domain of T cell receptor (TR) beta chain that participates in the antigen recognition. Alpha-beta T cell receptors are antigen specific receptors which are essential to the immune response and are present on the cell surface of T lymphocytes. Recognize peptide-major histocompatibility (MH) (pMH) complexes that are displayed by antigen presenting cells (APC), a prerequisite for efficient T cell adaptive immunity against pathogens. Binding of alpha-beta TR to pMH complex initiates TR-CD3 clustering on the cell surface and intracellular activation of LCK that phosphorylates the ITAM motifs of CD3G, CD3D, CD3E and CD247 enabling the recruitment of ZAP70. In turn ZAP70 phosphorylates LAT, which recruits numerous signaling molecules to form the LAT signalosome. The LAT signalosome propagates signal branching to three major signaling pathways, the calcium, the mitogen-activated protein kinase (MAPK) kinase and the nuclear factor NF-kappa-B (NF-kB) pathways, leading to the mobilization of transcription factors that are critical for gene expression and essential for T cell growth and differentiation. The T cell repertoire is generated in the thymus, by V-(D)-J rearrangement. This repertoire is then shaped by intrathymic selection events to generate a peripheral T cell pool of self-MH restricted, non-autoaggressive T cells. Post-thymic interaction of alpha-beta TR with the pMH complexes shapes TR structural and functional avidity. The chain is T cell receptor beta variable 4-1 from Homo sapiens (Human).